The following is an 876-amino-acid chain: MLTSKEIRESFKTFFASKGHKIVPSAPMVIKGDPTLMFTNAGMNQFKDIILGNTEAKYTRVADSQKCLRVSGKHNDLEEVGHDTYHHTMFEMLGNWSFGDYFKKEAIEWAWEYLVTVLGLDPQRLYATVFEGNPEEGLDRDNEAASYWAQFLPEERIINGNKHDNFWEMGDTGPCGPCSEIHIDLRSDEERAQINGLELINKSHPQVIEIWNLVFMQYNRKADASLTPLPHKVIDTGMGFERLCMALQGKTSNYDTDVFQPLIRTLATMTGIGYGEDSTSDIAMRVVADHIRTIAFAITDGQLPSNAKAGYVIRRILRRAVRYGYTFLHCREAFMYRLLPTLIDTMGDAYPELQAQRELISRVIKEEEESFLRTLETGIRLLEKKIADNKATGSTVLDGVAAFELYDTFGFPLDLTALILSENGMTVDESGFDTEMQKQKERARNAAAVEAGDWVVLREGESKFSGYDFTETETEILRYRQVKQKNKEYFQVVLSDTPFYAEMGGQVGDSGQLIDESGVAYDIFDTKRENNLSVHLMKKLPESTTDTFVARINQDKRRQAEANHTATHLLHEALREVLGTHVEQKGSFVSPEVLRFDFSHFGKMSPEEIRKVEELVSERIRADFQREEFRDVPIAEAQAMGAMALFGEKYGEEVRVLKYGSSVELCGGTHIPSTGMIGAFRIVTESSIASGVRRIEAVTGIGAERFIYEKEDILLAVKELFNNNPNLIKSIKKMLEEDASLKKQIADMKHERMLKFKKSLLEQDVRRRGIRLFLFQEIMEAETAKDIAFQIAGELQESFVLIAGTTEGGEKCALTVMLSKDLTEGGMDAAKLVRSAAKHIQGGGGGQPHFATAGGKNPKGLPAAIQQILTEAELTD.

H564, H568, C666, and H670 together coordinate Zn(2+).

This sequence belongs to the class-II aminoacyl-tRNA synthetase family. It depends on Zn(2+) as a cofactor.

It localises to the cytoplasm. It catalyses the reaction tRNA(Ala) + L-alanine + ATP = L-alanyl-tRNA(Ala) + AMP + diphosphate. Its function is as follows. Catalyzes the attachment of alanine to tRNA(Ala) in a two-step reaction: alanine is first activated by ATP to form Ala-AMP and then transferred to the acceptor end of tRNA(Ala). Also edits incorrectly charged Ser-tRNA(Ala) and Gly-tRNA(Ala) via its editing domain. The chain is Alanine--tRNA ligase from Porphyromonas gingivalis (strain ATCC BAA-308 / W83).